Reading from the N-terminus, the 633-residue chain is Putative ankyrin repeat protein L774 (633 aa).

ANK repeat units follow at residues 91-120 (IYGH…EYDP), 123-152 (NCDD…FFKI), 221-250 (NVNK…EYDF), 252-275 (TILK…ILDS), 338-367 (DYDV…DVNN), 369-393 (MTYA…TLST), and 517-546 (DNLK…NSND).

The protein is Putative ankyrin repeat protein L774 of Acanthamoeba polyphaga mimivirus (APMV).